Consider the following 547-residue polypeptide: Chaperonin GroEL (547 aa).

Residues 30–33, Lys-51, 87–91, Gly-415, and Asp-496 each bind ATP; these read TLGP and DGTTT.

Belongs to the chaperonin (HSP60) family. As to quaternary structure, forms a cylinder of 14 subunits composed of two heptameric rings stacked back-to-back. Interacts with the co-chaperonin GroES.

The protein resides in the cytoplasm. It carries out the reaction ATP + H2O + a folded polypeptide = ADP + phosphate + an unfolded polypeptide.. Its function is as follows. Together with its co-chaperonin GroES, plays an essential role in assisting protein folding. The GroEL-GroES system forms a nano-cage that allows encapsulation of the non-native substrate proteins and provides a physical environment optimized to promote and accelerate protein folding. The protein is Chaperonin GroEL of Actinobacillus pleuropneumoniae serotype 5b (strain L20).